We begin with the raw amino-acid sequence, 119 residues long: MAKHVTPREKRRARIRRKISGTAARPRLTIYKSLKHMYAQLVDDTTGTTIVSIATNAKALRDEVKDDDKTAAAKRVGEALAKAAMAKGIEAVVFDRNGFDYHGRVEAVAAAAREAGLKF.

Belongs to the universal ribosomal protein uL18 family. In terms of assembly, part of the 50S ribosomal subunit; part of the 5S rRNA/L5/L18/L25 subcomplex. Contacts the 5S and 23S rRNAs.

In terms of biological role, this is one of the proteins that bind and probably mediate the attachment of the 5S RNA into the large ribosomal subunit, where it forms part of the central protuberance. In Anaeromyxobacter sp. (strain Fw109-5), this protein is Large ribosomal subunit protein uL18.